The primary structure comprises 324 residues: Coproporphyrin III ferrochelatase (324 aa).

Residues histidine 184 and glutamate 266 each contribute to the Fe(2+) site.

Belongs to the ferrochelatase family.

Its subcellular location is the cytoplasm. The enzyme catalyses Fe-coproporphyrin III + 2 H(+) = coproporphyrin III + Fe(2+). It participates in porphyrin-containing compound metabolism; protoheme biosynthesis. In terms of biological role, involved in coproporphyrin-dependent heme b biosynthesis. Catalyzes the insertion of ferrous iron into coproporphyrin III to form Fe-coproporphyrin III. The sequence is that of Coproporphyrin III ferrochelatase from Lactiplantibacillus plantarum (strain ATCC BAA-793 / NCIMB 8826 / WCFS1) (Lactobacillus plantarum).